The sequence spans 317 residues: Ribosomal RNA small subunit methyltransferase H (317 aa).

Residues 32–34, aspartate 51, phenylalanine 78, aspartate 99, and glutamine 106 each bind S-adenosyl-L-methionine; that span reads GGH.

It belongs to the methyltransferase superfamily. RsmH family.

The protein resides in the cytoplasm. It catalyses the reaction cytidine(1402) in 16S rRNA + S-adenosyl-L-methionine = N(4)-methylcytidine(1402) in 16S rRNA + S-adenosyl-L-homocysteine + H(+). Functionally, specifically methylates the N4 position of cytidine in position 1402 (C1402) of 16S rRNA. This is Ribosomal RNA small subunit methyltransferase H from Helicobacter hepaticus (strain ATCC 51449 / 3B1).